The following is a 319-amino-acid chain: Beta-ketoacyl-[acyl-carrier-protein] synthase III (319 aa).

Residues Cys-115 and His-246 contribute to the active site. The interval 247 to 251 (QANLR) is ACP-binding. The active site involves Asn-276.

Belongs to the thiolase-like superfamily. FabH family. As to quaternary structure, homodimer.

Its subcellular location is the cytoplasm. It catalyses the reaction malonyl-[ACP] + acetyl-CoA + H(+) = 3-oxobutanoyl-[ACP] + CO2 + CoA. The protein operates within lipid metabolism; fatty acid biosynthesis. Functionally, catalyzes the condensation reaction of fatty acid synthesis by the addition to an acyl acceptor of two carbons from malonyl-ACP. Catalyzes the first condensation reaction which initiates fatty acid synthesis and may therefore play a role in governing the total rate of fatty acid production. Possesses both acetoacetyl-ACP synthase and acetyl transacylase activities. Its substrate specificity determines the biosynthesis of branched-chain and/or straight-chain of fatty acids. This is Beta-ketoacyl-[acyl-carrier-protein] synthase III from Coxiella burnetii (strain Dugway 5J108-111).